Consider the following 138-residue polypeptide: Acidic phospholipase A2 CoaPLA2 (138 aa).

A signal peptide spans 1–16; it reads MRTLWIVAVLLLGVEG. Disulfide bonds link Cys42–Cys131, Cys44–Cys60, Cys59–Cys111, Cys65–Cys138, Cys66–Cys104, Cys73–Cys97, and Cys91–Cys102. Ca(2+) is bound by residues Tyr43, Gly45, and Gly47. Residue His63 is part of the active site. Residue Asp64 coordinates Ca(2+). The active site involves Asp105.

Belongs to the phospholipase A2 family. Group II subfamily. D49 sub-subfamily. Homodimer. Requires Ca(2+) as cofactor. Expressed by the venom gland.

Its subcellular location is the secreted. It catalyses the reaction a 1,2-diacyl-sn-glycero-3-phosphocholine + H2O = a 1-acyl-sn-glycero-3-phosphocholine + a fatty acid + H(+). Its function is as follows. Snake venom phospholipase A2 (PLA2) that shows very low inhibition of ADP-induced platelet aggregation in platelet-rich plasma of human, rabbit and guinea pig. Shows edema-inducing activity and myotoxicity. PLA2 catalyzes the calcium-dependent hydrolysis of the 2-acyl groups in 3-sn-phosphoglycerides. The sequence is that of Acidic phospholipase A2 CoaPLA2 from Crotalus lutosus abyssus (Grand Canyon rattlesnake).